We begin with the raw amino-acid sequence, 119 residues long: Beta-2-microglobulin (119 aa).

An N-terminal signal peptide occupies residues 1-20 (MARFVVVPLFVLLSLFGLEA). One can recognise an Ig-like C1-type domain in the interval 25-114 (PKIQVYSRYP…VTFSTPKTVK (90 aa)). Cys-45 and Cys-100 are disulfide-bonded.

This sequence belongs to the beta-2-microglobulin family. In terms of assembly, heterodimer of an alpha chain and a beta chain. Beta-2-microglobulin is the beta-chain of major histocompatibility complex class I molecules.

The protein resides in the secreted. Its function is as follows. Component of the class I major histocompatibility complex (MHC). Involved in the presentation of peptide antigens to the immune system. The sequence is that of Beta-2-microglobulin (B2M) from Saguinus niger (Black tamarin).